The sequence spans 73 residues: uncharacterized protein (73 aa).

The segment at 48-73 (AKEPEKKTPSMEAKATSLSPNKASAS) is disordered. Over residues 63–73 (TSLSPNKASAS) the composition is skewed to polar residues.

This is an uncharacterized protein from Saccharomyces cerevisiae (strain ATCC 204508 / S288c) (Baker's yeast).